Reading from the N-terminus, the 332-residue chain is Cysteine and histidine-rich domain-containing protein 1 (332 aa).

N-acetylalanine is present on A2. The tract at residues 2-77 (ALLCYNRGCG…KPPEPVKPEV (76 aa)) is interaction with PPP5C. Zn(2+) is bound by residues C5, C10, C24, H27, C42, and C43. CHORD domains are found at residues 5–64 (CYNR…KGRH) and 157–216 (CKNG…KGKH). T47 is subject to Phosphothreonine. S51 carries the post-translational modification Phosphoserine. Zn(2+) contacts are provided by C59, H64, C157, C162, C176, H179, C194, C195, C211, and H216. Residues 65–316 (NSEKPPEPVK…AEPMQWASLE (252 aa)) form an interaction with HSP90AA1 and HSP90AB1 region. The 90-residue stretch at 227 to 316 (VVPCRHDWHQ…AEPMQWASLE (90 aa)) folds into the CS domain.

In terms of assembly, interacts with HSP90AA1, ROCK1 and ROCK2. Interacts with HSP90AB1 and PPP5C. As to expression, underexpressed in many breast and lung cancers.

Functionally, regulates centrosome duplication, probably by inhibiting the kinase activity of ROCK2. Proposed to act as co-chaperone for HSP90. May play a role in the regulation of NOD1 via a HSP90 chaperone complex. In vitro, has intrinsic chaperone activity. This function may be achieved by inhibiting association of ROCK2 with NPM1. Plays a role in ensuring the localization of the tyrosine kinase receptor EGFR to the plasma membrane, and thus ensures the subsequent regulation of EGFR activity and EGF-induced actin cytoskeleton remodeling. Involved in stress response. Prevents tumorigenesis. In Homo sapiens (Human), this protein is Cysteine and histidine-rich domain-containing protein 1 (CHORDC1).